Reading from the N-terminus, the 443-residue chain is 3-isopropylmalate dehydratase large subunit (443 aa).

Positions 347, 407, and 410 each coordinate [4Fe-4S] cluster.

It belongs to the aconitase/IPM isomerase family. LeuC type 1 subfamily. In terms of assembly, heterodimer of LeuC and LeuD. [4Fe-4S] cluster is required as a cofactor.

The enzyme catalyses (2R,3S)-3-isopropylmalate = (2S)-2-isopropylmalate. It functions in the pathway amino-acid biosynthesis; L-leucine biosynthesis; L-leucine from 3-methyl-2-oxobutanoate: step 2/4. Catalyzes the isomerization between 2-isopropylmalate and 3-isopropylmalate, via the formation of 2-isopropylmaleate. The protein is 3-isopropylmalate dehydratase large subunit of Buchnera aphidicola subsp. Uroleucon aeneum.